Consider the following 508-residue polypeptide: Photosystem II CP47 reaction center protein (508 aa).

A run of 6 helical transmembrane segments spans residues S21–S36, I101–W115, G140–F156, I203–S218, V237–V252, and T457–R472.

It belongs to the PsbB/PsbC family. PsbB subfamily. As to quaternary structure, PSII is composed of 1 copy each of membrane proteins PsbA, PsbB, PsbC, PsbD, PsbE, PsbF, PsbH, PsbI, PsbJ, PsbK, PsbL, PsbM, PsbT, PsbX, PsbY, PsbZ, Psb30/Ycf12, at least 3 peripheral proteins of the oxygen-evolving complex and a large number of cofactors. It forms dimeric complexes. It depends on Binds multiple chlorophylls. PSII binds additional chlorophylls, carotenoids and specific lipids. as a cofactor.

Its subcellular location is the plastid. It localises to the chloroplast thylakoid membrane. One of the components of the core complex of photosystem II (PSII). It binds chlorophyll and helps catalyze the primary light-induced photochemical processes of PSII. PSII is a light-driven water:plastoquinone oxidoreductase, using light energy to abstract electrons from H(2)O, generating O(2) and a proton gradient subsequently used for ATP formation. The polypeptide is Photosystem II CP47 reaction center protein (Pinus thunbergii (Japanese black pine)).